The following is a 165-amino-acid chain: Large ribosomal subunit protein bL17 (165 aa).

Basic and acidic residues predominate over residues 138–158 (QEKREAQEKAREEKRTARKSD). The disordered stretch occupies residues 138–165 (QEKREAQEKAREEKRTARKSDSVPARKK).

The protein belongs to the bacterial ribosomal protein bL17 family. In terms of assembly, part of the 50S ribosomal subunit. Contacts protein L32.

This is Large ribosomal subunit protein bL17 from Leptospira borgpetersenii serovar Hardjo-bovis (strain JB197).